A 382-amino-acid chain; its full sequence is Mannitol-1-phosphate 5-dehydrogenase (382 aa).

3 to 14 (ALHFGAGNIGRG) is a binding site for NAD(+). Lys269 bears the N6-acetyllysine mark.

It belongs to the mannitol dehydrogenase family.

It catalyses the reaction D-mannitol 1-phosphate + NAD(+) = beta-D-fructose 6-phosphate + NADH + H(+). The sequence is that of Mannitol-1-phosphate 5-dehydrogenase from Escherichia coli (strain ATCC 8739 / DSM 1576 / NBRC 3972 / NCIMB 8545 / WDCM 00012 / Crooks).